A 583-amino-acid chain; its full sequence is Epsin-2 (583 aa).

A 1,2-diacyl-sn-glycero-3-phospho-(1D-myo-inositol-4,5-bisphosphate)-binding residues include R8, K11, R25, N30, R63, and H73. One can recognise an ENTH domain in the interval 12 to 144 (NIVNSYSEAE…KDEERLKVER (133 aa)). A compositionally biased stretch (polar residues) spans 165–181 (QITFGRGSSQPNLSISH). A disordered region spans residues 165–217 (QITFGRGSSQPNLSISHSEQEYGKAGGSPASYHGSTSPRVSSELEQARPQTSG). R170 is subject to Omega-N-methylarginine. A phosphoserine mark is found at S173, S192, and S195. Polar residues predominate over residues 197-216 (HGSTSPRVSSELEQARPQTS). 2 UIM domains span residues 218–237 (EEELQLQLALAMSREVAEQE) and 243–262 (GDDLRLQMALEESRRDTVKV). Disordered stretches follow at residues 293-384 (SGPV…KPSP) and 411-457 (TSKK…PESF). 4 tandem repeats follow at residues 301-303 (EPW), 313-315 (NPW), 326-328 (DPW), and 340-342 (DPW). Over residues 301–315 (EPWSTGTPANQTNPW) the composition is skewed to polar residues. The interval 301-377 (EPWSTGTPAN…SDAGKTADAW (77 aa)) is 6 X 3 AA repeats of [DE]-P-W. Residues 346–355 (TTASIQSVPK) show a composition bias toward polar residues. 2 consecutive repeat copies span residues 358-360 (DPW) and 375-377 (DAW). Residue S431 is modified to Phosphoserine. The segment covering 437 to 448 (SQSLTSASSKPS) has biased composition (low complexity). T453 bears the Phosphothreonine mark. A run of 2 repeats spans residues 482-484 (NPF) and 496-498 (NPF). Positions 482-581 (NPFLAPGAAA…AQPAGTTNPF (100 aa)) are 3 X 3 AA repeats of N-P-F. S514 bears the Phosphoserine mark. The stretch at 579 to 581 (NPF) is repeat 3.

It belongs to the epsin family. In terms of assembly, binds AP-2 and clathrin. Interacts with ITSN1. Interacts with UBQLN2. Binds EPS15. Post-translationally, ubiquitinated. Highly expressed in brain. Detected at lower levels in lung, liver, muscle and testis.

The protein localises to the cytoplasm. Its function is as follows. Plays a role in the formation of clathrin-coated invaginations and endocytosis. This Rattus norvegicus (Rat) protein is Epsin-2 (Epn2).